A 146-amino-acid chain; its full sequence is uncharacterized protein (146 aa).

This is an uncharacterized protein from Acidianus filamentous virus 1 (isolate United States/Yellowstone) (AFV-1).